A 391-amino-acid chain; its full sequence is 3-ketoacyl-CoA thiolase (391 aa).

Residue Cys90 is the Acyl-thioester intermediate of the active site. Catalysis depends on proton acceptor residues His347 and Cys377.

This sequence belongs to the thiolase-like superfamily. Thiolase family.

The enzyme catalyses an acyl-CoA + acetyl-CoA = a 3-oxoacyl-CoA + CoA. Its pathway is lipid metabolism; fatty acid beta-oxidation. Functionally, involved in the degradation of long-chain fatty acids. This Bacillus subtilis (strain 168) protein is 3-ketoacyl-CoA thiolase (fadA).